The primary structure comprises 294 residues: tRNA pseudouridine synthase B (294 aa).

Aspartate 38 acts as the Nucleophile in catalysis.

It belongs to the pseudouridine synthase TruB family. Type 1 subfamily.

It carries out the reaction uridine(55) in tRNA = pseudouridine(55) in tRNA. In terms of biological role, responsible for synthesis of pseudouridine from uracil-55 in the psi GC loop of transfer RNAs. The chain is tRNA pseudouridine synthase B from Clostridium perfringens (strain ATCC 13124 / DSM 756 / JCM 1290 / NCIMB 6125 / NCTC 8237 / Type A).